Here is a 117-residue protein sequence, read N- to C-terminus: Large ribosomal subunit protein bL20 (117 aa).

Belongs to the bacterial ribosomal protein bL20 family.

Binds directly to 23S ribosomal RNA and is necessary for the in vitro assembly process of the 50S ribosomal subunit. It is not involved in the protein synthesizing functions of that subunit. This Rickettsia felis (strain ATCC VR-1525 / URRWXCal2) (Rickettsia azadi) protein is Large ribosomal subunit protein bL20.